The following is a 257-amino-acid chain: Major prion protein (257 aa).

The signal sequence occupies residues 1–24; that stretch reads MVKSHIGGWILLLFVATWSDVGLC. The interval 25–234 is interaction with GRB2, ERI3 and SYN1; that stretch reads KKRPKPGGWN…ESEAYYQRGA (210 aa). The tract at residues 28–110 is disordered; it reads PKPGGWNTGG…GQWGKPNKPK (83 aa). Composition is skewed to gly residues over residues 33 to 48 and 55 to 101; these read WNTG…GSPG and QGGG…GSHG. 5 repeat units span residues 54 to 62, 63 to 70, 71 to 78, 79 to 86, and 87 to 95. Residues 54 to 95 form a 5 X 8 AA tandem repeats of P-H-G-G-G-W-G-Q region; sequence PQGGGGWGQPHGGGWGQPHGGGWGQPHGGGWGQPHGGGGWGQ. Cu(2+)-binding residues include H64, G65, G66, H72, G73, G74, H80, G81, G82, H88, G90, and G91. The cysteines at positions 183 and 218 are disulfide-linked. N-linked (GlcNAc...) asparagine glycans are attached at residues N185 and N201. A lipid anchor (GPI-anchor amidated alanine) is attached at A234. The propeptide at 235–257 is removed in mature form; sequence SAILFSPPPVILLISLLILLIVG.

Belongs to the prion family. As to quaternary structure, monomer and homodimer. Has a tendency to aggregate into amyloid fibrils containing a cross-beta spine, formed by a steric zipper of superposed beta-strands. Soluble oligomers may represent an intermediate stage on the path to fibril formation. Copper binding may promote oligomerization. Interacts with GRB2, APP, ERI3/PRNPIP and SYN1. Mislocalized cytosolically exposed PrP interacts with MGRN1; this interaction alters MGRN1 subcellular location and causes lysosomal enlargement. Interacts with KIAA1191.

It localises to the cell membrane. Its subcellular location is the golgi apparatus. Its function is as follows. Its primary physiological function is unclear. Has cytoprotective activity against internal or environmental stresses. May play a role in neuronal development and synaptic plasticity. May be required for neuronal myelin sheath maintenance. May play a role in iron uptake and iron homeostasis. Soluble oligomers are toxic to cultured neuroblastoma cells and induce apoptosis (in vitro). Association with GPC1 (via its heparan sulfate chains) targets PRNP to lipid rafts. Also provides Cu(2+) or Zn(2+) for the ascorbate-mediated GPC1 deaminase degradation of its heparan sulfate side chains. The polypeptide is Major prion protein (Vulpes lagopus (Arctic fox)).